A 200-amino-acid polypeptide reads, in one-letter code: Large ribosomal subunit protein uL4 (200 aa).

Residues 38-75 (GRQGSKQQKNRSDVSGGGKRPWRQKGTGRARAGTSRGP) form a disordered region.

This sequence belongs to the universal ribosomal protein uL4 family. Part of the 50S ribosomal subunit.

Functionally, one of the primary rRNA binding proteins, this protein initially binds near the 5'-end of the 23S rRNA. It is important during the early stages of 50S assembly. It makes multiple contacts with different domains of the 23S rRNA in the assembled 50S subunit and ribosome. In terms of biological role, forms part of the polypeptide exit tunnel. This chain is Large ribosomal subunit protein uL4, found in Azotobacter vinelandii (strain DJ / ATCC BAA-1303).